Reading from the N-terminus, the 386-residue chain is Succinate--CoA ligase [ADP-forming] subunit beta (386 aa).

An ATP-grasp domain is found at Lys9–Glu244. ATP-binding positions include Lys46, Gly53–Gly55, Glu99, Ala102, and Glu107. Mg(2+) contacts are provided by Asn199 and Asp213. Substrate is bound by residues Asn264 and Gly321–Met323.

Belongs to the succinate/malate CoA ligase beta subunit family. In terms of assembly, heterotetramer of two alpha and two beta subunits. Requires Mg(2+) as cofactor.

The catalysed reaction is succinate + ATP + CoA = succinyl-CoA + ADP + phosphate. It catalyses the reaction GTP + succinate + CoA = succinyl-CoA + GDP + phosphate. Its pathway is carbohydrate metabolism; tricarboxylic acid cycle; succinate from succinyl-CoA (ligase route): step 1/1. Functionally, succinyl-CoA synthetase functions in the citric acid cycle (TCA), coupling the hydrolysis of succinyl-CoA to the synthesis of either ATP or GTP and thus represents the only step of substrate-level phosphorylation in the TCA. The beta subunit provides nucleotide specificity of the enzyme and binds the substrate succinate, while the binding sites for coenzyme A and phosphate are found in the alpha subunit. In Aromatoleum aromaticum (strain DSM 19018 / LMG 30748 / EbN1) (Azoarcus sp. (strain EbN1)), this protein is Succinate--CoA ligase [ADP-forming] subunit beta.